The following is a 469-amino-acid chain: Aspartyl/glutamyl-tRNA(Asn/Gln) amidotransferase subunit B (469 aa).

This sequence belongs to the GatB/GatE family. GatB subfamily. As to quaternary structure, heterotrimer of A, B and C subunits.

The enzyme catalyses L-glutamyl-tRNA(Gln) + L-glutamine + ATP + H2O = L-glutaminyl-tRNA(Gln) + L-glutamate + ADP + phosphate + H(+). It carries out the reaction L-aspartyl-tRNA(Asn) + L-glutamine + ATP + H2O = L-asparaginyl-tRNA(Asn) + L-glutamate + ADP + phosphate + 2 H(+). Functionally, allows the formation of correctly charged Asn-tRNA(Asn) or Gln-tRNA(Gln) through the transamidation of misacylated Asp-tRNA(Asn) or Glu-tRNA(Gln) in organisms which lack either or both of asparaginyl-tRNA or glutaminyl-tRNA synthetases. The reaction takes place in the presence of glutamine and ATP through an activated phospho-Asp-tRNA(Asn) or phospho-Glu-tRNA(Gln). This chain is Aspartyl/glutamyl-tRNA(Asn/Gln) amidotransferase subunit B, found in Methanococcus vannielii (strain ATCC 35089 / DSM 1224 / JCM 13029 / OCM 148 / SB).